The sequence spans 391 residues: S-adenosylmethionine synthase (391 aa).

His14 serves as a coordination point for ATP. Mg(2+) is bound at residue Asp16. Glu42 is a K(+) binding site. Residues Glu55 and Gln98 each contribute to the L-methionine site. A flexible loop region spans residues 98-108; that stretch reads QSADIAMGVDE. Residues 172 to 174, 238 to 239, Asp247, 253 to 254, Ala270, and Lys274 contribute to the ATP site; these read DGK, RF, and RK. Asp247 is a binding site for L-methionine. Lys278 serves as a coordination point for L-methionine.

It belongs to the AdoMet synthase family. In terms of assembly, homotetramer; dimer of dimers. Requires Mg(2+) as cofactor. It depends on K(+) as a cofactor.

The protein localises to the cytoplasm. The catalysed reaction is L-methionine + ATP + H2O = S-adenosyl-L-methionine + phosphate + diphosphate. Its pathway is amino-acid biosynthesis; S-adenosyl-L-methionine biosynthesis; S-adenosyl-L-methionine from L-methionine: step 1/1. Functionally, catalyzes the formation of S-adenosylmethionine (AdoMet) from methionine and ATP. The overall synthetic reaction is composed of two sequential steps, AdoMet formation and the subsequent tripolyphosphate hydrolysis which occurs prior to release of AdoMet from the enzyme. The polypeptide is S-adenosylmethionine synthase (Clostridium botulinum (strain Alaska E43 / Type E3)).